The chain runs to 655 residues: MENLEKNTKKKIKKPNNFKKNNKDKTEELKDKPTPRMFKMTPKSSKFLHQLGVTGRKHTEKPVPLNDPDYEKKIREIQAKEAKKIRSDEVVNNNSKKQNNNKQAKKKANKNKKQKGNNNNFQNNKKPENWKQKPAANNQVKAIPNSEKSTAKTAINLIIKRTFETLKQNNLIAPNLKQNPNKKDKPQQPNVAAKNNNQKEVKKPYNNFVNNQKNHNKNNAGNKGDNKQPTKPLNQSKLSKSTIVELPFTPNFTSNQPKPTQKEDSKKVKAKKAENSQPQESNKQVKKLEVKTNQQKQDQTKKKQPKENKNQQIKAVNLNNNQQKTNNNNQKNSVDKSENDNNKKKSEANQKQENLNPNNNNKKKEDSKNESNNIPLINKNISDQQIVKISNYIKDNYPVIYADLKEKNRLGFNSNLDDDKLIVYANYEAKDLELLLKKFKVVTNNIGLYEEALTHNSYANEMHLKYNYQRLEFLGDAIINKIVAEYLFNHSDSSEGEMTKDRIKIIQSNTLIKAATQLELINYIRVGEGLKIAPLSPKILEDIFEAFIGAMYLDQGEYAVRKILNDTIIGYYQKGQLTENTDYKSIFQEIIHSTGLNMKIHYERTYDRQKNLHTVSLYAGGIMYGEGKDSSTHKAEIKAAKEAISKFRGLLKLEK.

2 disordered regions span residues Met-1–Lys-148 and Leu-171–Leu-376. The interval Met-1–Ile-400 is unknown. Positions Thr-8–Lys-20 are enriched in basic residues. 2 stretches are compositionally biased toward basic and acidic residues: residues Asn-21–Thr-34 and Asp-69–Glu-89. Positions Asn-92–Lys-102 are enriched in low complexity. Positions Gln-103–Lys-115 are enriched in basic residues. A compositionally biased stretch (polar residues) spans Ala-135–Lys-148. The segment covering Asn-206–Lys-223 has biased composition (low complexity). 2 stretches are compositionally biased toward polar residues: residues Pro-229–Thr-242 and Pro-250–Pro-259. 2 stretches are compositionally biased toward basic and acidic residues: residues Thr-260–Glu-274 and Asp-298–Lys-309. Low complexity predominate over residues Asn-310–Asn-332. Over residues Ser-333 to Gln-350 the composition is skewed to basic and acidic residues. Residues Lys-351–Asn-360 show a composition bias toward low complexity. The tract at residues Tyr-401–Lys-655 is RNase 3. The RNase III domain maps to Leu-432–Gly-556. Glu-472 contacts Mg(2+). Asp-476 is an active-site residue. Asp-542 and Glu-545 together coordinate Mg(2+). Glu-545 is an active-site residue. In terms of domain architecture, DRBM spans Asp-582 to Gly-649.

This sequence belongs to the ribonuclease III family. Homodimer. Mg(2+) serves as cofactor.

Its subcellular location is the cytoplasm. It carries out the reaction Endonucleolytic cleavage to 5'-phosphomonoester.. Functionally, digests double-stranded RNA. Involved in the processing of primary rRNA transcript to yield the immediate precursors to the large and small rRNAs (23S and 16S). Processes some mRNAs, and tRNAs when they are encoded in the rRNA operon. Processes pre-crRNA and tracrRNA of type II CRISPR loci if present in the organism. The chain is Ribonuclease 3 (rnc) from Mycoplasmoides gallisepticum (strain R(low / passage 15 / clone 2)) (Mycoplasma gallisepticum).